We begin with the raw amino-acid sequence, 174 residues long: Anthrone oxygenase CPUR_05435 (174 aa).

A run of 4 helical transmembrane segments spans residues 13-33 (VALASGVFLSGAMFSVSAIMI), 56-76 (YGSVLMPSMSVAIAAVYGFAS), 88-108 (CLAAGALTLAIAPYTWLAMIP), and 140-160 (WVVLHSIRSILPLAGAIMGFT).

It belongs to the anthrone oxygenase family.

It localises to the membrane. The enzyme catalyses emodin anthrone + O2 = emodin + H2O + H(+). Functionally, anthrone oxygenase; part of the ergochrome gene cluster responsible for the typical purple-black color of the ergot sclerotia. The ergochrome gene cluster produces several ergot pigments including the yellow ergochrome secalonic acid and its derivatives, as well as the red anthraquinones endocrocin and clavorubin. The pathway begins with the synthesis of atrochrysone thioester by the polyketide synthase (PKS) CPUR_05437. The atrochrysone carboxyl ACP thioesterase CPUR_05436 then breaks the thioester bond and releases the atrochrysone carboxylic acid from CPUR_05437. The decarboxylase CPUR_05434 then catalyzes the concerted decarboxylation-elimination required to convert atochrysone carboxylic acid into emodin anthrone, which is further oxidized to emodin by the anthrone oxygenase CPUR_05435. Emodin is further modified to yield monodictyphenone via several steps involving CPUR_05427, CPUR_05428, CPUR_05429 and CPUR_05430. The short chain dehydrogenase/reductase CPUR_05418 then catalyzes the C-5 ketoreduction to give the xanthone skeleton of the monomeric units. Ergochromes formation requires further dimerization steps of different xanthone units, probably catalyzed by the cytochrome P450 monooxygenase CPUR_05419. CPUR_05425, CPUR_05426 and CPUR_05431 are unique to Claviceps, thus it is likely that they are involved in further modification of xanthone units or in their dimerization. The yellow ergochromes and the red anthraquinone pigments endocrocin and clavorubin are products from the same PKS derived precursors and the latter are likely shunt products in the pathway of xanthone biosynthesis. It is proposed that atrochrysone carboxylic acid released from the PKS CPUR_05437 can also be converted to endocrocin anthrone which is further oxidized into endocrocin by CPUR_05435. Endocrocin could be then modified to clavorubin, possibly by CPUR_05423 and CPUR_05431. Clavorubin is the principal anthraquinone metabolite produced by the cluster with a much higher yield compared to endocrocin. In Claviceps purpurea (strain 20.1) (Ergot fungus), this protein is Anthrone oxygenase CPUR_05435.